A 157-amino-acid polypeptide reads, in one-letter code: Endoribonuclease YbeY (157 aa).

Residues histidine 116, histidine 120, and histidine 126 each contribute to the Zn(2+) site.

Belongs to the endoribonuclease YbeY family. The cofactor is Zn(2+).

Its subcellular location is the cytoplasm. Functionally, single strand-specific metallo-endoribonuclease involved in late-stage 70S ribosome quality control and in maturation of the 3' terminus of the 16S rRNA. This Renibacterium salmoninarum (strain ATCC 33209 / DSM 20767 / JCM 11484 / NBRC 15589 / NCIMB 2235) protein is Endoribonuclease YbeY.